The sequence spans 256 residues: Ubiquinone/menaquinone biosynthesis C-methyltransferase UbiE (256 aa).

S-adenosyl-L-methionine contacts are provided by residues Thr-79, Asp-100, and 128-129 (DA).

It belongs to the class I-like SAM-binding methyltransferase superfamily. MenG/UbiE family.

The catalysed reaction is a 2-demethylmenaquinol + S-adenosyl-L-methionine = a menaquinol + S-adenosyl-L-homocysteine + H(+). The enzyme catalyses a 2-methoxy-6-(all-trans-polyprenyl)benzene-1,4-diol + S-adenosyl-L-methionine = a 5-methoxy-2-methyl-3-(all-trans-polyprenyl)benzene-1,4-diol + S-adenosyl-L-homocysteine + H(+). It functions in the pathway quinol/quinone metabolism; menaquinone biosynthesis; menaquinol from 1,4-dihydroxy-2-naphthoate: step 2/2. The protein operates within cofactor biosynthesis; ubiquinone biosynthesis. In terms of biological role, methyltransferase required for the conversion of demethylmenaquinol (DMKH2) to menaquinol (MKH2) and the conversion of 2-polyprenyl-6-methoxy-1,4-benzoquinol (DDMQH2) to 2-polyprenyl-3-methyl-6-methoxy-1,4-benzoquinol (DMQH2). In Stutzerimonas stutzeri (strain A1501) (Pseudomonas stutzeri), this protein is Ubiquinone/menaquinone biosynthesis C-methyltransferase UbiE.